A 193-amino-acid polypeptide reads, in one-letter code: dCTP deaminase, dUMP-forming (193 aa).

Residues 107 to 112, aspartate 125, 133 to 135, glutamine 154, and tyrosine 168 contribute to the dCTP site; these read RSSLGR and TLE. Glutamate 135 acts as the Proton donor/acceptor in catalysis. Residues 169–193 form a disordered region; the sequence is AESSGKYHGDERPSPSKMHLDFCRG. Positions 173-193 are enriched in basic and acidic residues; sequence GKYHGDERPSPSKMHLDFCRG.

This sequence belongs to the dCTP deaminase family. In terms of assembly, homotrimer.

The enzyme catalyses dCTP + 2 H2O = dUMP + NH4(+) + diphosphate. The protein operates within pyrimidine metabolism; dUMP biosynthesis; dUMP from dCTP: step 1/1. In terms of biological role, bifunctional enzyme that catalyzes both the deamination of dCTP to dUTP and the hydrolysis of dUTP to dUMP without releasing the toxic dUTP intermediate. The protein is dCTP deaminase, dUMP-forming of Methanopyrus kandleri (strain AV19 / DSM 6324 / JCM 9639 / NBRC 100938).